Consider the following 476-residue polypeptide: Aspartyl/glutamyl-tRNA(Asn/Gln) amidotransferase subunit B (476 aa).

This sequence belongs to the GatB/GatE family. GatB subfamily. As to quaternary structure, heterotrimer of A, B and C subunits.

It catalyses the reaction L-glutamyl-tRNA(Gln) + L-glutamine + ATP + H2O = L-glutaminyl-tRNA(Gln) + L-glutamate + ADP + phosphate + H(+). The catalysed reaction is L-aspartyl-tRNA(Asn) + L-glutamine + ATP + H2O = L-asparaginyl-tRNA(Asn) + L-glutamate + ADP + phosphate + 2 H(+). Its function is as follows. Allows the formation of correctly charged Asn-tRNA(Asn) or Gln-tRNA(Gln) through the transamidation of misacylated Asp-tRNA(Asn) or Glu-tRNA(Gln) in organisms which lack either or both of asparaginyl-tRNA or glutaminyl-tRNA synthetases. The reaction takes place in the presence of glutamine and ATP through an activated phospho-Asp-tRNA(Asn) or phospho-Glu-tRNA(Gln). In Clostridium botulinum (strain Okra / Type B1), this protein is Aspartyl/glutamyl-tRNA(Asn/Gln) amidotransferase subunit B.